The sequence spans 119 residues: Protein TusC (119 aa).

Belongs to the DsrF/TusC family. Heterohexamer, formed by a dimer of trimers. The hexameric TusBCD complex contains 2 copies each of TusB, TusC and TusD. The TusBCD complex interacts with TusE.

It localises to the cytoplasm. Its function is as follows. Part of a sulfur-relay system required for 2-thiolation of 5-methylaminomethyl-2-thiouridine (mnm(5)s(2)U) at tRNA wobble positions. The sequence is that of Protein TusC from Citrobacter koseri (strain ATCC BAA-895 / CDC 4225-83 / SGSC4696).